Reading from the N-terminus, the 397-residue chain is Probable pyruvate dehydrogenase E1 component subunit alpha, mitochondrial (397 aa).

The pyruvate site is built by histidine 86, tyrosine 112, arginine 113, glycine 159, valine 161, aspartate 190, glycine 191, alanine 192, and asparagine 219. 9 residues coordinate thiamine diphosphate: tyrosine 112, arginine 113, glycine 159, valine 161, aspartate 190, glycine 191, alanine 192, asparagine 219, and histidine 286. Position 190 (aspartate 190) interacts with Mg(2+). Asparagine 219 contributes to the Mg(2+) binding site.

Tetramer of 2 alpha and 2 beta subunits. It depends on thiamine diphosphate as a cofactor. Mg(2+) is required as a cofactor.

The protein localises to the mitochondrion matrix. The catalysed reaction is N(6)-[(R)-lipoyl]-L-lysyl-[protein] + pyruvate + H(+) = N(6)-[(R)-S(8)-acetyldihydrolipoyl]-L-lysyl-[protein] + CO2. With respect to regulation, E1 activity is regulated by phosphorylation (inactivation) and dephosphorylation (activation) of the alpha subunit. Its function is as follows. The pyruvate dehydrogenase complex catalyzes the overall conversion of pyruvate to acetyl-CoA and CO(2). It contains multiple copies of three enzymatic components: pyruvate dehydrogenase (E1), dihydrolipoamide acetyltransferase (E2) and lipoamide dehydrogenase (E3). The chain is Probable pyruvate dehydrogenase E1 component subunit alpha, mitochondrial from Caenorhabditis elegans.